Reading from the N-terminus, the 505-residue chain is ATP synthase subunit alpha (505 aa).

Gly-169–Thr-176 is an ATP binding site.

It belongs to the ATPase alpha/beta chains family. F-type ATPases have 2 components, CF(1) - the catalytic core - and CF(0) - the membrane proton channel. CF(1) has five subunits: alpha(3), beta(3), gamma(1), delta(1), epsilon(1). CF(0) has three main subunits: a(1), b(2) and c(9-12). The alpha and beta chains form an alternating ring which encloses part of the gamma chain. CF(1) is attached to CF(0) by a central stalk formed by the gamma and epsilon chains, while a peripheral stalk is formed by the delta and b chains.

Its subcellular location is the cell membrane. The catalysed reaction is ATP + H2O + 4 H(+)(in) = ADP + phosphate + 5 H(+)(out). Produces ATP from ADP in the presence of a proton gradient across the membrane. The alpha chain is a regulatory subunit. This is ATP synthase subunit alpha from Clostridium acetobutylicum (strain ATCC 824 / DSM 792 / JCM 1419 / IAM 19013 / LMG 5710 / NBRC 13948 / NRRL B-527 / VKM B-1787 / 2291 / W).